Consider the following 251-residue polypeptide: 1-(5-phosphoribosyl)-5-[(5-phosphoribosylamino)methylideneamino] imidazole-4-carboxamide isomerase (251 aa).

The active-site Proton acceptor is the D8. Residue D131 is the Proton donor of the active site.

This sequence belongs to the HisA/HisF family.

It localises to the cytoplasm. The catalysed reaction is 1-(5-phospho-beta-D-ribosyl)-5-[(5-phospho-beta-D-ribosylamino)methylideneamino]imidazole-4-carboxamide = 5-[(5-phospho-1-deoxy-D-ribulos-1-ylimino)methylamino]-1-(5-phospho-beta-D-ribosyl)imidazole-4-carboxamide. It functions in the pathway amino-acid biosynthesis; L-histidine biosynthesis; L-histidine from 5-phospho-alpha-D-ribose 1-diphosphate: step 4/9. In Burkholderia thailandensis (strain ATCC 700388 / DSM 13276 / CCUG 48851 / CIP 106301 / E264), this protein is 1-(5-phosphoribosyl)-5-[(5-phosphoribosylamino)methylideneamino] imidazole-4-carboxamide isomerase.